The primary structure comprises 144 residues: Interleukin-9 (144 aa).

Residues 1–18 (MLVTYILASVLLFSSVLG) form the signal peptide. The residue at position 19 (Q19) is a Pyrrolidone carboxylic acid. N50, N78, N101, and N114 each carry an N-linked (GlcNAc...) asparagine glycan.

It belongs to the IL-7/IL-9 family. In terms of assembly, interacts with IL9R. Interacts with IL2RG.

The protein localises to the secreted. Functionally, multifunctional cytokine secreted mainly by T-helper 2 lymphocytes and also mast cells or NKT cells that plays important roles in the immune response against parasites. Affects intestinal epithelial permeability and adaptive immunity. In addition, induces the differentiation of specific T-cell subsets such as IL-17 producing helper T-cells (TH17) and also proliferation and differentiation of mast cells. Mechanistically, exerts its biological effects through a receptor composed of IL9R subunit and a signal transducing subunit IL2RG. Receptor stimulation results in the rapid activation of JAK1 and JAK3 kinase activities leading to STAT1, STAT3 and STAT5-mediated transcriptional programs. Induction of differentiation genes seems to be mediated by STAT1 alone, while protection of cells from apoptosis depends on STAT3 and STAT5. The protein is Interleukin-9 (Il9) of Mus musculus (Mouse).